We begin with the raw amino-acid sequence, 1181 residues long: Pesticidal crystal protein Cry1Ae (1181 aa).

This sequence belongs to the delta endotoxin family.

Functionally, promotes colloidosmotic lysis by binding to the midgut epithelial cells of many lepidopteran larvae. The chain is Pesticidal crystal protein Cry1Ae (cry1Ae) from Bacillus thuringiensis subsp. alesti.